Consider the following 312-residue polypeptide: Ribosomal RNA small subunit methyltransferase H (312 aa).

Residues 33-35 (GGH), aspartate 53, phenylalanine 80, aspartate 101, and glutamine 108 contribute to the S-adenosyl-L-methionine site.

This sequence belongs to the methyltransferase superfamily. RsmH family.

The protein resides in the cytoplasm. The catalysed reaction is cytidine(1402) in 16S rRNA + S-adenosyl-L-methionine = N(4)-methylcytidine(1402) in 16S rRNA + S-adenosyl-L-homocysteine + H(+). In terms of biological role, specifically methylates the N4 position of cytidine in position 1402 (C1402) of 16S rRNA. This chain is Ribosomal RNA small subunit methyltransferase H, found in Desulfosudis oleivorans (strain DSM 6200 / JCM 39069 / Hxd3) (Desulfococcus oleovorans).